Consider the following 314-residue polypeptide: MTTFEIECIESTREGLRDHYSKFCLEPLNQGQGTTLGNALRRTLLADLEGTAIVAVRIAGVSHEFSTIPGIREDVLEILLNLKEVVLKSQIGTSGVGRLRVQGPAIVTTNHLELPSEIELIDPNQYIATICGNNILEMEFRIETGKGYNLVERDSDESSIDFLQVDAIFMPVKKVNYLSKDIRSENNLIQEQLTLEVWTNGSIDPQDAVSQAGKILTELLFPLKEINFKPDDSESIIEDSKINQILIEELQLSVRAYNCLKRAQIHSVADLLDYSQEDLIEIKNFGQKSAEEVIDALQKRLGINLPKEKTSKSN.

The segment at 1–227 is alpha N-terminal domain (alpha-NTD); it reads MTTFEIECIE…ELLFPLKEIN (227 aa). The interval 237–314 is alpha C-terminal domain (alpha-CTD); that stretch reads IEDSKINQIL…LPKEKTSKSN (78 aa).

This sequence belongs to the RNA polymerase alpha chain family. As to quaternary structure, in plastids the minimal PEP RNA polymerase catalytic core is composed of four subunits: alpha, beta, beta', and beta''. When a (nuclear-encoded) sigma factor is associated with the core the holoenzyme is formed, which can initiate transcription.

It localises to the plastid. It is found in the chloroplast. It carries out the reaction RNA(n) + a ribonucleoside 5'-triphosphate = RNA(n+1) + diphosphate. DNA-dependent RNA polymerase catalyzes the transcription of DNA into RNA using the four ribonucleoside triphosphates as substrates. The chain is DNA-directed RNA polymerase subunit alpha from Pyrenomonas salina.